The following is a 333-amino-acid chain: 4-hydroxy-2-oxovalerate aldolase (333 aa).

One can recognise a Pyruvate carboxyltransferase domain in the interval 3 to 253 (ILINDSTLRD…NTGIDLYHFL (251 aa)). Residue 11–12 (RD) participates in substrate binding. Asp12 provides a ligand contact to Mn(2+). His15 (proton acceptor) is an active-site residue. Residues Ser165 and His192 each contribute to the substrate site. Residues His192 and His194 each coordinate Mn(2+).

The protein belongs to the 4-hydroxy-2-oxovalerate aldolase family. Interacts with MhpF.

The enzyme catalyses (S)-4-hydroxy-2-oxopentanoate = acetaldehyde + pyruvate. It participates in aromatic compound metabolism; 3-phenylpropanoate degradation. Its function is as follows. Catalyzes the retro-aldol cleavage of 4-hydroxy-2-oxopentanoate to pyruvate and acetaldehyde. Is involved in the meta-cleavage pathway for the degradation of aromatic compounds. In Serratia proteamaculans (strain 568), this protein is 4-hydroxy-2-oxovalerate aldolase.